Consider the following 368-residue polypeptide: Propane 2-monooxygenase, hydroxylase component small subunit (368 aa).

Over residues 1 to 17 the composition is skewed to basic and acidic residues; that stretch reads MSAPEKPRERSFPKIEF. The tract at residues 1–32 is disordered; sequence MSAPEKPRERSFPKIEFTDSEAGAKEFPSSKS.

It belongs to the TmoE/XamoE family. As to quaternary structure, the propane 2-monooxygenase multicomponent enzyme system is composed of an electron transfer component and a monooxygenase component interacting with the effector protein MimD. The electron transfer component is composed of a reductase (MimB), and the monooxygenase component is formed by a large subunit (MimA) and a small subunit (MimC). Requires the presence of the chaperonin-like protein MimG to ensure a productive folding, resulting of a soluble MimC, which leads to the active form of MimABCD.

The catalysed reaction is propane + NADH + O2 + H(+) = propan-2-ol + NAD(+) + H2O. It carries out the reaction acetone + NADH + O2 + H(+) = hydroxyacetone + NAD(+) + H2O. It catalyses the reaction butan-2-one + NADH + O2 + H(+) = 1-hydroxy-2-butanone + NAD(+) + H2O. The enzyme catalyses phenol + NADH + O2 + H(+) = hydroquinone + NAD(+) + H2O. Component of the propane 2-monooxygenase multicomponent enzyme system which is involved in the degradation of propane via the O2-dependent hydroxylation of propane. Also involved in the degradation of acetone via the O2-dependent hydroxylation of acetone. Also able to catalyze the oxidation of phenol, methylethylketone (2-butanone), 1-propanol and 2-propanol. The chain is Propane 2-monooxygenase, hydroxylase component small subunit from Mycolicibacterium smegmatis (strain ATCC 700084 / mc(2)155) (Mycobacterium smegmatis).